Consider the following 461-residue polypeptide: MQIYNTLTRRKETFTPLDAGRVRMYVCGITVYDYCHIGHARVMVAFDMITRYLRWRGFEVDYVRNITDIDDKILKRAEENDEPIAALTERMIAAMHEDEGRLGVLRPDREPRATAHVDDIVAMVQRLIDKGYAYPAANGDVYYRVRRFEGYGKLSNRDLDDMRAGSRVEVETAKEDPLDFVLWKAAKPGEASWPSPWGDGRPGWHIECSAMSTCCLGDTFDIHGGGPDLVFPHHENEIAQSEAATGRPYVNTWMHAGAVRVDQEKMSKSLGNFFTIREVLEAHAPEVVRYLLLASHYRSPINYAPDALSDARRSLERFYNALQGVAPVAGEVAAGYRERFIAAMDDDFNTAEALAVLFDLARELNRAKQEAPAHAPALAHELKELGGVLGLFGQDPEGFLQAGAGRLPMSEEDIEARIEARAQAKKAKDFATADGIRDELAALGIVLKDGRDGTTWVVEGD.

Cysteine 27 serves as a coordination point for Zn(2+). Residues 29–39 (ITVYDYCHIGH) carry the 'HIGH' region motif. Zn(2+) is bound by residues cysteine 208, histidine 233, and glutamate 237. Residues 265 to 269 (KMSKS) carry the 'KMSKS' region motif. Lysine 268 is a binding site for ATP.

The protein belongs to the class-I aminoacyl-tRNA synthetase family. In terms of assembly, monomer. Requires Zn(2+) as cofactor.

Its subcellular location is the cytoplasm. The catalysed reaction is tRNA(Cys) + L-cysteine + ATP = L-cysteinyl-tRNA(Cys) + AMP + diphosphate. This is Cysteine--tRNA ligase from Chromohalobacter salexigens (strain ATCC BAA-138 / DSM 3043 / CIP 106854 / NCIMB 13768 / 1H11).